Reading from the N-terminus, the 186-residue chain is Peptidyl-tRNA hydrolase (186 aa).

TRNA is bound at residue Tyr15. His20 (proton acceptor) is an active-site residue. TRNA is bound by residues Tyr64, Asn66, and Asn112.

It belongs to the PTH family. As to quaternary structure, monomer.

The protein localises to the cytoplasm. The catalysed reaction is an N-acyl-L-alpha-aminoacyl-tRNA + H2O = an N-acyl-L-amino acid + a tRNA + H(+). Functionally, hydrolyzes ribosome-free peptidyl-tRNAs (with 1 or more amino acids incorporated), which drop off the ribosome during protein synthesis, or as a result of ribosome stalling. Catalyzes the release of premature peptidyl moieties from peptidyl-tRNA molecules trapped in stalled 50S ribosomal subunits, and thus maintains levels of free tRNAs and 50S ribosomes. In Azobacteroides pseudotrichonymphae genomovar. CFP2, this protein is Peptidyl-tRNA hydrolase.